Reading from the N-terminus, the 488-residue chain is Glutamyl-tRNA(Gln) amidotransferase subunit A (488 aa).

Residues Lys78 and Ser153 each act as charge relay system in the active site. The active-site Acyl-ester intermediate is the Ser177.

This sequence belongs to the amidase family. GatA subfamily. In terms of assembly, heterotrimer of A, B and C subunits.

The enzyme catalyses L-glutamyl-tRNA(Gln) + L-glutamine + ATP + H2O = L-glutaminyl-tRNA(Gln) + L-glutamate + ADP + phosphate + H(+). Allows the formation of correctly charged Gln-tRNA(Gln) through the transamidation of misacylated Glu-tRNA(Gln) in organisms which lack glutaminyl-tRNA synthetase. The reaction takes place in the presence of glutamine and ATP through an activated gamma-phospho-Glu-tRNA(Gln). The chain is Glutamyl-tRNA(Gln) amidotransferase subunit A from Solidesulfovibrio magneticus (strain ATCC 700980 / DSM 13731 / RS-1) (Desulfovibrio magneticus).